A 199-amino-acid chain; its full sequence is Ribonuclease HII (199 aa).

Positions 10–199 (HLVAGVDEVG…VKRALGLASN (190 aa)) constitute an RNase H type-2 domain. 3 residues coordinate a divalent metal cation: Asp16, Glu17, and Asp108.

Belongs to the RNase HII family. Mn(2+) is required as a cofactor. It depends on Mg(2+) as a cofactor.

The protein localises to the cytoplasm. The enzyme catalyses Endonucleolytic cleavage to 5'-phosphomonoester.. Functionally, endonuclease that specifically degrades the RNA of RNA-DNA hybrids. The protein is Ribonuclease HII of Klebsiella pneumoniae (strain 342).